The following is a 323-amino-acid chain: Pectate lyase A (323 aa).

The signal sequence occupies residues 1-31; the sequence is MTNFKWIVAAAGLLFGQVLAAPTATSTHAKR. N-linked (GlcNAc...) asparagine glycosylation is present at Asn-95. Positions 136, 165, and 169 each coordinate Ca(2+). Arg-222 is a catalytic residue.

This sequence belongs to the polysaccharide lyase 1 family. Ca(2+) serves as cofactor.

Its subcellular location is the secreted. It carries out the reaction Eliminative cleavage of (1-&gt;4)-alpha-D-galacturonan to give oligosaccharides with 4-deoxy-alpha-D-galact-4-enuronosyl groups at their non-reducing ends.. Its function is as follows. Pectinolytic enzyme consist of four classes of enzymes: pectin lyase, polygalacturonase, pectin methylesterase and rhamnogalacturonase. Among pectinolytic enzymes, pectin lyase is the most important in depolymerization of pectin, since it cleaves internal glycosidic bonds of highly methylated pectins. Favors pectate, the anion, over pectin, the methyl ester. In Aspergillus niger, this protein is Pectate lyase A (plyA).